The primary structure comprises 122 residues: Protein TCL1B3 (122 aa).

It belongs to the TCL1 family.

This Mus musculus (Mouse) protein is Protein TCL1B3 (Tcl1b3).